Consider the following 357-residue polypeptide: S-adenosyl-L-methionine:benzoic acid/salicylic acid carboxyl methyltransferase 1 (357 aa).

Tyr18 lines the S-adenosyl-L-homocysteine pocket. Gln25 lines the benzoate pocket. S-adenosyl-L-homocysteine contacts are provided by Cys59, Asn64, Asp96, Leu97, Ser135, and Phe136. Trp157 lines the benzoate pocket. Mg(2+)-binding residues include Asn168, Asp254, Phe256, and Asn257. Position 260 (Gln260) interacts with benzoate.

This sequence belongs to the methyltransferase superfamily. Type-7 methyltransferase family. As to expression, predominantly expressed in petal limbs and tubes of corollas.

It carries out the reaction benzoate + S-adenosyl-L-methionine = methyl benzoate + S-adenosyl-L-homocysteine. The catalysed reaction is salicylate + S-adenosyl-L-methionine = methyl salicylate + S-adenosyl-L-homocysteine. It functions in the pathway aromatic compound metabolism. Converts benzoic acid into the volatile ester methyl benzoates. This scent, mostly produced in a rhythmical, diurnal manner, attracts the pollinators. This chain is S-adenosyl-L-methionine:benzoic acid/salicylic acid carboxyl methyltransferase 1, found in Petunia hybrida (Petunia).